The sequence spans 101 residues: Large ribosomal subunit protein bL27 (101 aa).

Residues 1-21 (MAHKKAGGSSRNGRDSRSKRL) are disordered.

The protein belongs to the bacterial ribosomal protein bL27 family.

The polypeptide is Large ribosomal subunit protein bL27 (Buchnera aphidicola subsp. Cinara cedri (strain Cc)).